Here is a 427-residue protein sequence, read N- to C-terminus: ATP-sensitive inward rectifier potassium channel 12 (427 aa).

Residues 1-77 are Cytoplasmic-facing; sequence MTASGRTNPY…LADMFTTCVD (77 aa). Cys75 carries the S-nitrosocysteine modification. The helical transmembrane segment at 78 to 104 threads the bilayer; it reads IRWRYMLLIFSLAFLASWLLFGVIFWV. A 1,2-diacyl-sn-glycero-3-phospho-(1D-myo-inositol-4,5-bisphosphate)-binding residues include Arg79 and Arg81. At 105 to 129 the chain is on the extracellular side; sequence IAVAHGDLEPAEAHGRTPCVLQVHG. A disulfide bridge connects residues Cys123 and Cys155. The segment at residues 130-146 is an intramembrane region (helical; Pore-forming); sequence FMAAFLFSIETQTTIGY. Residues Thr143, Ile144, Gly145, and Tyr146 each coordinate K(+). The Selectivity filter signature appears at 143–148; it reads TIGYGL. The Extracellular segment spans residues 147–155; sequence GLRCVTEEC. The chain crosses the membrane as a helical span at residues 156–183; the sequence is PVAVFMVVAQSIVGCIIDSFMIGAIMAK. A 1,2-diacyl-sn-glycero-3-phospho-(1D-myo-inositol-4,5-bisphosphate)-binding residues include Lys183 and Lys188. Residues 184-427 are Cytoplasmic-facing; sequence MARPKKRAQT…QRPYRRESEI (244 aa). Positions 387–396 are enriched in acidic residues; sequence DEEDEVDGEQ. The interval 387-427 is disordered; sequence DEEDEVDGEQDSLGPQARRDFDRPQAGTALEQRPYRRESEI. The PDZ-binding motif lies at 425 to 427; the sequence is SEI.

It belongs to the inward rectifier-type potassium channel (TC 1.A.2.1) family. KCNJ12 subfamily. Homotetramer. Forms heteromer with KCNJ4. Association, via its PDZ-recognition domain, with LIN7A, LIN7B, LIN7C, DLG1, CASK and APBA1 plays a key role in its localization and trafficking.

The protein localises to the membrane. It catalyses the reaction K(+)(in) = K(+)(out). Its activity is regulated as follows. Activated by phosphatidylinositol 4,5-biphosphate (PtdIns(4,5)P2). PtdIns(4,5)P2 binding to the cytoplasmic side of the channel triggers a conformation change leading to channel opening. Functionally, inward rectifying potassium channel that probably participates in controlling the resting membrane potential in electrically excitable cells. Probably participates in establishing action potential waveform and excitability of neuronal and muscle tissues. Inward rectifier potassium channels are characterized by a greater tendency to allow potassium to flow into the cell rather than out of it. Their voltage dependence is regulated by the concentration of extracellular potassium; as external potassium is raised, the voltage range of the channel opening shifts to more positive voltages. The inward rectification is mainly due to the blockage of outward current by internal magnesium. The chain is ATP-sensitive inward rectifier potassium channel 12 (KCNJ12) from Bos taurus (Bovine).